A 307-amino-acid polypeptide reads, in one-letter code: Ribosomal RNA small subunit methyltransferase H (307 aa).

Residues Ala-32 to His-34, Asp-51, Ile-82, Asp-99, and Gln-106 contribute to the S-adenosyl-L-methionine site.

The protein belongs to the methyltransferase superfamily. RsmH family.

The protein resides in the cytoplasm. It carries out the reaction cytidine(1402) in 16S rRNA + S-adenosyl-L-methionine = N(4)-methylcytidine(1402) in 16S rRNA + S-adenosyl-L-homocysteine + H(+). Specifically methylates the N4 position of cytidine in position 1402 (C1402) of 16S rRNA. This Campylobacter concisus (strain 13826) protein is Ribosomal RNA small subunit methyltransferase H.